Consider the following 311-residue polypeptide: Probable cysteine synthase (311 aa).

Lys-45 carries the post-translational modification N6-(pyridoxal phosphate)lysine. Pyridoxal 5'-phosphate is bound by residues Asn-75, 182–186 (GTGGT), and Ser-270.

It belongs to the cysteine synthase/cystathionine beta-synthase family. The cofactor is pyridoxal 5'-phosphate.

The enzyme catalyses O-acetyl-L-serine + hydrogen sulfide = L-cysteine + acetate. It participates in amino-acid biosynthesis; L-cysteine biosynthesis; L-cysteine from L-serine: step 2/2. The polypeptide is Probable cysteine synthase (ytkP) (Bacillus subtilis (strain 168)).